Consider the following 180-residue polypeptide: 3-hydroxyanthranilate 3,4-dioxygenase (180 aa).

Position 46 (arginine 46) interacts with O2. Positions 50, 56, and 94 each coordinate Fe cation. Glutamate 56 contributes to the substrate binding site. Substrate-binding residues include arginine 98 and glutamate 109. The Fe cation site is built by cysteine 124, cysteine 127, cysteine 161, and cysteine 164.

Belongs to the 3-HAO family. Homodimer. Fe(2+) serves as cofactor.

It carries out the reaction 3-hydroxyanthranilate + O2 = (2Z,4Z)-2-amino-3-carboxymuconate 6-semialdehyde. Its pathway is cofactor biosynthesis; NAD(+) biosynthesis; quinolinate from L-kynurenine: step 3/3. Its function is as follows. Catalyzes the oxidative ring opening of 3-hydroxyanthranilate to 2-amino-3-carboxymuconate semialdehyde, which spontaneously cyclizes to quinolinate. This chain is 3-hydroxyanthranilate 3,4-dioxygenase, found in Jannaschia sp. (strain CCS1).